The sequence spans 201 residues: Small ribosomal subunit protein uS4 (201 aa).

Positions 28-47 (KKNYPPGQHGNSRKRKTSEY) are disordered. Residues 92-155 (GRLDNIVFRL…KSLEVIANSL (64 aa)) enclose the S4 RNA-binding domain.

The protein belongs to the universal ribosomal protein uS4 family. As to quaternary structure, part of the 30S ribosomal subunit. Contacts protein S5. The interaction surface between S4 and S5 is involved in control of translational fidelity.

One of the primary rRNA binding proteins, it binds directly to 16S rRNA where it nucleates assembly of the body of the 30S subunit. Its function is as follows. With S5 and S12 plays an important role in translational accuracy. The protein is Small ribosomal subunit protein uS4 of Bacteroides fragilis (strain YCH46).